Consider the following 89-residue polypeptide: MSITAERRTALISEYARAANDTGSPEVQIALLSERIANLTEHLKTHAKDFHSRRGLLMLVGQRRGLLDYLKRKEVARYDALIKRLGLRR.

This sequence belongs to the universal ribosomal protein uS15 family. In terms of assembly, part of the 30S ribosomal subunit. Forms a bridge to the 50S subunit in the 70S ribosome, contacting the 23S rRNA.

Functionally, one of the primary rRNA binding proteins, it binds directly to 16S rRNA where it helps nucleate assembly of the platform of the 30S subunit by binding and bridging several RNA helices of the 16S rRNA. In terms of biological role, forms an intersubunit bridge (bridge B4) with the 23S rRNA of the 50S subunit in the ribosome. The chain is Small ribosomal subunit protein uS15 from Granulibacter bethesdensis (strain ATCC BAA-1260 / CGDNIH1).